The chain runs to 1029 residues: Chitin synthase 3 (1029 aa).

Residues 1–29 (MAYYSRPASAGAARAQDDQDPYPYYPDPD) form a disordered region. Asn37 is a glycosylation site (N-linked (GlcNAc...) asparagine). Residues 46–71 (ASGAASSASHTSPFSDAHAASASPAS) are compositionally biased toward low complexity. Disordered stretches follow at residues 46-105 (ASGA…SRMP) and 168-209 (LAHR…AGTS). Residues 76–91 (SHQQVSAHAPQQQHMS) are compositionally biased toward polar residues. Over residues 191 to 202 (AHDEKYAYDRPD) the composition is skewed to basic and acidic residues. Asn401, Asn514, Asn527, and Asn689 each carry an N-linked (GlcNAc...) asparagine glycan. Helical transmembrane passes span 723-743 (FYSF…YIFF), 760-780 (IGVF…SSFI), 796-816 (AAVV…VLCL), 830-850 (AQMV…SLLA), 860-880 (FLQY…YAFC), 963-983 (VVLA…NGDA), and 998-1018 (VYMV…FIGS).

It belongs to the chitin synthase family. Class I subfamily.

It is found in the cell membrane. The protein resides in the cytoplasmic vesicle membrane. It catalyses the reaction [(1-&gt;4)-N-acetyl-beta-D-glucosaminyl](n) + UDP-N-acetyl-alpha-D-glucosamine = [(1-&gt;4)-N-acetyl-beta-D-glucosaminyl](n+1) + UDP + H(+). In terms of biological role, polymerizes chitin, a structural polymer of the cell wall and septum, by transferring the sugar moiety of UDP-GlcNAc to the non-reducing end of the growing chitin polymer. The sequence is that of Chitin synthase 3 from Mycosarcoma maydis (Corn smut fungus).